The sequence spans 529 residues: Low affinity inorganic phosphate transporter 4 (529 aa).

At 1-21 the chain is on the cytoplasmic side; it reads MASDNLVVLNALDTARTQWYH. A helical membrane pass occupies residues 22–42; that stretch reads VTAVIIAGMGFFTDAYDLFCI. Over 43–71 the chain is Extracellular; it reads STVSKLLGRLYYYDPSTKAPGKLPHMANN. The chain crosses the membrane as a helical span at residues 72–92; it reads WVIGVALVGTLSGQLVFGWLG. Residues 93–99 lie on the Cytoplasmic side of the membrane; that stretch reads DKLGRKK. A helical membrane pass occupies residues 100-120; the sequence is VYGLTLILMVICALCSGLSLG. Topologically, residues 121–125 are extracellular; sequence YSPKS. Residues 126 to 146 form a helical membrane-spanning segment; sequence VIGTLCFFRFWLGFGIGGDYP. The Cytoplasmic portion of the chain corresponds to 147-161; it reads LSATIMSEYANKSTR. Residues 162–182 traverse the membrane as a helical segment; that stretch reads GAFIAAVFAMQGVGIIFAGLV. Residues 183–211 lie on the Extracellular side of the membrane; that stretch reads SMTISKVFLMNFEGKPFNVDEVLSTEPEA. Residues 212-232 traverse the membrane as a helical segment; the sequence is DYVWRIVLMLGALPALLTYYW. Topologically, residues 233–291 are cytoplasmic; the sequence is RMKMPETGRYTAIIEGNAKQAAIDMGKVLDIEIQAEGDKLAQFKAANEYSLLSNEFFQR. Residues 292–312 traverse the membrane as a helical segment; sequence HGLHLIGTMSTWFLLDIAFYS. Residues 313-344 are Extracellular-facing; sequence QNLTQKDIFPVMGLTSKANTISALREMFETSR. A glycan (N-linked (GlcNAc...) asparagine) is linked at N314. Residues 345 to 365 traverse the membrane as a helical segment; it reads AMFVIALFGTFPGYWFTVFFI. The Cytoplasmic portion of the chain corresponds to 366 to 374; the sequence is EKIGRFKIQ. A helical transmembrane segment spans residues 375-395; the sequence is LVGFFMMSVFMAIIGVKYDYL. Residues 396–405 lie on the Extracellular side of the membrane; that stretch reads RNKEHKWTFA. A helical membrane pass occupies residues 406–426; the sequence is ALYGLTFFFANFGPNSTTFVL. Topologically, residues 427 to 437 are cytoplasmic; it reads PAELFPTRVRS. The helical transmembrane segment at 438-458 threads the bilayer; the sequence is TCHALSAALGKAGAMISAFGI. The Extracellular portion of the chain corresponds to 459-471; it reads QQYTQDQDVRKIK. The helical transmembrane segment at 472–492 threads the bilayer; that stretch reads TAMLLLAFTNMVGFCCTFLVT. Topologically, residues 493 to 529 are cytoplasmic; the sequence is ETKGRSLEEISGEDGRQNETQMKTTRPVSGHPDDGWE. A disordered region spans residues 501 to 529; it reads EISGEDGRQNETQMKTTRPVSGHPDDGWE. The span at 510–519 shows a compositional bias: polar residues; the sequence is NETQMKTTRP.

This sequence belongs to the major facilitator superfamily. Phosphate:H(+) symporter (TC 2.A.1.9) family.

The protein localises to the cell membrane. It catalyses the reaction phosphate(in) + H(+)(in) = phosphate(out) + H(+)(out). Functionally, low-affinity transporter for external inorganic phosphate (Pi) probably involved in the acquisition of phosphate released by arbuscular mycorrhizal (AM) fungi (e.g. Rhizophagus irregularis and Glomus intraradices) during AM symbiosis. Acts as a Pi-sensing machinery at the root tip level, independently of AM fungi, involved in the regulation of early root branching and lateral roots formation. The sequence is that of Low affinity inorganic phosphate transporter 4 from Petunia hybrida (Petunia).